Consider the following 255-residue polypeptide: Ditrans,polycis-undecaprenyl-diphosphate synthase ((2E,6E)-farnesyl-diphosphate specific) (255 aa).

Asp21 is an active-site residue. Mg(2+) is bound at residue Asp21. Substrate-binding positions include 22–25 (GNGR), Trp26, Arg34, His38, and 66–68 (SSE). Catalysis depends on Asn69, which acts as the Proton acceptor. Substrate contacts are provided by residues Trp70, Arg72, Arg189, and 195–197 (RIS). Glu208 lines the Mg(2+) pocket.

The protein belongs to the UPP synthase family. In terms of assembly, homodimer. Mg(2+) serves as cofactor.

It carries out the reaction 8 isopentenyl diphosphate + (2E,6E)-farnesyl diphosphate = di-trans,octa-cis-undecaprenyl diphosphate + 8 diphosphate. In terms of biological role, catalyzes the sequential condensation of isopentenyl diphosphate (IPP) with (2E,6E)-farnesyl diphosphate (E,E-FPP) to yield (2Z,6Z,10Z,14Z,18Z,22Z,26Z,30Z,34E,38E)-undecaprenyl diphosphate (di-trans,octa-cis-UPP). UPP is the precursor of glycosyl carrier lipid in the biosynthesis of bacterial cell wall polysaccharide components such as peptidoglycan and lipopolysaccharide. This Xylella fastidiosa (strain 9a5c) protein is Ditrans,polycis-undecaprenyl-diphosphate synthase ((2E,6E)-farnesyl-diphosphate specific).